We begin with the raw amino-acid sequence, 385 residues long: GTP cyclohydrolase-2 (385 aa).

The DHBP synthase-like stretch occupies residues Met-1–Val-189. Residues Val-190–Phe-385 are GTP cyclohydrolase II. Arg-240 to Glu-244 is a binding site for GTP. Positions 245, 256, and 258 each coordinate Zn(2+). GTP-binding positions include Gln-261, Glu-283–Arg-285, and Thr-305. Residue Asp-317 is the Proton acceptor of the active site. Arg-319 (nucleophile) is an active-site residue. GTP contacts are provided by Thr-340 and Lys-345.

It in the N-terminal section; belongs to the DHBP synthase family. In the C-terminal section; belongs to the GTP cyclohydrolase II family. Zn(2+) serves as cofactor.

It catalyses the reaction GTP + 4 H2O = 2,5-diamino-6-hydroxy-4-(5-phosphoribosylamino)-pyrimidine + formate + 2 phosphate + 3 H(+). It participates in cofactor biosynthesis; riboflavin biosynthesis; 5-amino-6-(D-ribitylamino)uracil from GTP: step 1/4. In terms of biological role, catalyzes the conversion of GTP to 2,5-diamino-6-ribosylamino-4(3H)-pyrimidinone 5'-phosphate (DARP), formate and pyrophosphate. This chain is GTP cyclohydrolase-2 (ribA), found in Azospirillum brasilense.